A 249-amino-acid polypeptide reads, in one-letter code: Ribosomal RNA small subunit methyltransferase G (249 aa).

S-adenosyl-L-methionine-binding positions include Gly-88, Phe-93, 111 to 113 (DAT), 139 to 140 (AE), and Arg-158. A disulfide bridge connects residues Cys-164 and Cys-249. The RNA binding stretch occupies residues 245–246 (RH).

The protein belongs to the methyltransferase superfamily. RNA methyltransferase RsmG family.

The protein localises to the cytoplasm. It carries out the reaction guanosine(527) in 16S rRNA + S-adenosyl-L-methionine = N(7)-methylguanosine(527) in 16S rRNA + S-adenosyl-L-homocysteine. Its function is as follows. Specifically methylates the N7 position of guanine in position 527 of 16S rRNA. Shows a marked preference for deproteinized 16S rRNA as substrate and is completely inactive with native 30S subunits as substrate. The polypeptide is Ribosomal RNA small subunit methyltransferase G (Thermus thermophilus (strain ATCC 27634 / DSM 579 / HB8)).